A 190-amino-acid chain; its full sequence is Vascular endothelial growth factor A (190 aa).

A signal peptide spans 1–26 (MNFLLSWVHWTLALLLYLHHAKWSQA). 3 disulfide bridges follow: Cys51–Cys93, Cys82–Cys127, and Cys86–Cys129. N-linked (GlcNAc...) asparagine glycosylation occurs at Asn100.

This sequence belongs to the PDGF/VEGF growth factor family. Homodimer; disulfide-linked. Also found as heterodimer with PGF. Interacts with NRP1. Interacts with isoform 2 of BSG. Interacts with CD82; this interaction inhibits VEGFA-mediated signaling pathway.

The protein localises to the secreted. Its function is as follows. Growth factor active in angiogenesis, vasculogenesis and endothelial cell growth. Induces endothelial cell proliferation, promotes cell migration, inhibits apoptosis and induces permeabilization of blood vessels. Binds to the FLT1/VEGFR1 and KDR/VEGFR2 receptors, heparan sulfate and heparin. Binding to NRP1 receptor initiates a signaling pathway needed for motor neuron axon guidance and cell body migration, including for the caudal migration of facial motor neurons from rhombomere 4 to rhombomere 6 during embryonic development. Also binds the DEAR/FBXW7-AS1 receptor. The chain is Vascular endothelial growth factor A (VEGFA) from Mesocricetus auratus (Golden hamster).